Consider the following 316-residue polypeptide: Transaldolase 2 (316 aa).

Lysine 131 functions as the Schiff-base intermediate with substrate in the catalytic mechanism.

Belongs to the transaldolase family. Type 1 subfamily. In terms of assembly, homodimer.

The protein localises to the cytoplasm. The catalysed reaction is D-sedoheptulose 7-phosphate + D-glyceraldehyde 3-phosphate = D-erythrose 4-phosphate + beta-D-fructose 6-phosphate. It functions in the pathway carbohydrate degradation; pentose phosphate pathway; D-glyceraldehyde 3-phosphate and beta-D-fructose 6-phosphate from D-ribose 5-phosphate and D-xylulose 5-phosphate (non-oxidative stage): step 2/3. In terms of biological role, transaldolase is important for the balance of metabolites in the pentose-phosphate pathway. The polypeptide is Transaldolase 2 (Shigella sonnei (strain Ss046)).